The sequence spans 490 residues: Aspartyl/glutamyl-tRNA(Asn/Gln) amidotransferase subunit B (490 aa).

The protein belongs to the GatB/GatE family. GatB subfamily. In terms of assembly, heterotrimer of A, B and C subunits.

The catalysed reaction is L-glutamyl-tRNA(Gln) + L-glutamine + ATP + H2O = L-glutaminyl-tRNA(Gln) + L-glutamate + ADP + phosphate + H(+). It catalyses the reaction L-aspartyl-tRNA(Asn) + L-glutamine + ATP + H2O = L-asparaginyl-tRNA(Asn) + L-glutamate + ADP + phosphate + 2 H(+). Allows the formation of correctly charged Asn-tRNA(Asn) or Gln-tRNA(Gln) through the transamidation of misacylated Asp-tRNA(Asn) or Glu-tRNA(Gln) in organisms which lack either or both of asparaginyl-tRNA or glutaminyl-tRNA synthetases. The reaction takes place in the presence of glutamine and ATP through an activated phospho-Asp-tRNA(Asn) or phospho-Glu-tRNA(Gln). The sequence is that of Aspartyl/glutamyl-tRNA(Asn/Gln) amidotransferase subunit B from Prochlorococcus marinus (strain AS9601).